A 125-amino-acid chain; its full sequence is Large ribosomal subunit protein bL12 (125 aa).

Belongs to the bacterial ribosomal protein bL12 family. In terms of assembly, homodimer. Part of the ribosomal stalk of the 50S ribosomal subunit. Forms a multimeric L10(L12)X complex, where L10 forms an elongated spine to which 2 to 4 L12 dimers bind in a sequential fashion. Binds GTP-bound translation factors.

In terms of biological role, forms part of the ribosomal stalk which helps the ribosome interact with GTP-bound translation factors. Is thus essential for accurate translation. This Francisella tularensis subsp. tularensis (strain SCHU S4 / Schu 4) protein is Large ribosomal subunit protein bL12.